The primary structure comprises 1978 residues: Sodium channel protein type 8 subunit alpha (1978 aa).

Disordered stretches follow at residues M1–E20 and R28–G62. The Cytoplasmic segment spans residues M1–S132. Residues R28–A61 show a composition bias toward basic and acidic residues. The I repeat unit spans residues I114–Q442. The helical transmembrane segment at V133–F151 threads the bilayer. Topologically, residues S152–S158 are extracellular. The chain crosses the membrane as a helical span at residues K159–A179. The Cytoplasmic segment spans residues R180–P193. A helical transmembrane segment spans residues W194–V211. At D212 to S217 the chain is on the extracellular side. N215 carries N-linked (GlcNAc...) asparagine glycosylation. Residues A218–I234 traverse the membrane as a helical segment. Topologically, residues P235–D253 are cytoplasmic. The chain crosses the membrane as a helical span at residues V254–F273. The Extracellular portion of the chain corresponds to M274–T355. Residues C281 and C333 are joined by a disulfide bond. N289, N295, N308, and N326 each carry an N-linked (GlcNAc...) asparagine glycan. The segment at residues F356–L380 is an intramembrane region (pore-forming). Na(+) is bound at residue E373. The Extracellular segment spans residues R381–Y387. The helical transmembrane segment at M388 to A408 threads the bilayer. Topologically, residues V409–P751 are cytoplasmic. Disordered regions lie at residues A446–R530 and D576–R597. Over residues S473–K486 the composition is skewed to low complexity. Positions K489 to Q500 are enriched in basic residues. Composition is skewed to basic and acidic residues over residues K501–R530 and D586–R597. Phosphoserine occurs at positions 518 and 520. The stretch at C733 to G1005 is one II repeat. Residues F752–M770 form a helical membrane-spanning segment. Residues E771–H781 are Extracellular-facing. Residues V782–K801 traverse the membrane as a helical segment. Residues L802–W815 are Cytoplasmic-facing. A helical transmembrane segment spans residues N816–V835. Over E836 to G837 the chain is Extracellular. Residues L838–S855 form a helical membrane-spanning segment. The Cytoplasmic segment spans residues W856–G871. Residues A872–V890 traverse the membrane as a helical segment. The Extracellular segment spans residues G891–D919. C904 and C910 are joined by a disulfide. The segment at residues F920–W940 is an intramembrane region (pore-forming). Residues E934 and E937 each coordinate Na(+). The Extracellular portion of the chain corresponds to D941 to I953. C942 and C951 are disulfide-bonded. The helical transmembrane segment at V954–L974 threads the bilayer. Over L975–W1197 the chain is Cytoplasmic. The segment at N1105 to V1146 is disordered. Residues L1178–L1493 form an III repeat. Residues F1198–F1215 traverse the membrane as a helical segment. Over E1216–T1228 the chain is Extracellular. A helical transmembrane segment spans residues I1229 to L1247. The Cytoplasmic portion of the chain corresponds to K1248–A1261. A helical membrane pass occupies residues W1262 to N1280. Residues A1281–G1288 lie on the Extracellular side of the membrane. A helical transmembrane segment spans residues A1289–R1307. The Cytoplasmic portion of the chain corresponds to F1308–S1324. Residues I1325 to V1344 traverse the membrane as a helical segment. Over N1345–V1397 the chain is Extracellular. C1354 and C1374 are joined by a disulfide. 3 N-linked (GlcNAc...) asparagine glycosylation sites follow: N1356, N1370, and N1381. An intramembrane region (pore-forming) is located at residues G1398 to A1419. Residues A1420–I1436 lie on the Extracellular side of the membrane. The chain crosses the membrane as a helical span at residues Y1437–I1458. Topologically, residues G1459–A1521 are cytoplasmic. Residue S1495 is modified to Phosphoserine; by PKC. The IV repeat unit spans residues I1502–Q1799. Residues F1522–V1539 form a helical membrane-spanning segment. Over E1540–N1550 the chain is Extracellular. The helical transmembrane segment at I1551–L1569 threads the bilayer. At K1570–I1581 the chain is on the cytoplasmic side. A helical membrane pass occupies residues G1582–F1599. Residues L1600 to T1612 lie on the Extracellular side of the membrane. Residues L1613–I1629 form a helical membrane-spanning segment. Residues K1630–A1648 lie on the Cytoplasmic side of the membrane. The helical transmembrane segment at L1649–F1666 threads the bilayer. Topologically, residues G1667 to T1688 are extracellular. Residues F1689–P1711 constitute an intramembrane region (pore-forming). Residues I1712–G1740 are Extracellular-facing. The cysteines at positions 1719 and 1734 are disulfide-linked. A helical transmembrane segment spans residues I1741 to I1763. Over L1764–C1978 the chain is Cytoplasmic. An IQ domain is found at E1893 to K1922. The segment at L1923–C1978 is disordered. Residues T1936–S1947 show a composition bias toward polar residues. Basic and acidic residues predominate over residues T1949–C1978.

This sequence belongs to the sodium channel (TC 1.A.1.10) family. Nav1.6/SCN8A subfamily. The voltage-sensitive sodium channel consists of an ion-conducting pore-forming alpha subunit regulated by one or more beta-1 (SCN1B), beta-2 (SCN2B), beta-3 (SCN3B) and/or beta-4 (SCN4B) subunits. Beta-1 (SCN1B) and beta-3 (SCN3B) are non-covalently associated with alpha, while beta-2 (SCN2B) and beta-4 (SCN4B) are covalently linked by disulfide bonds. Interacts with NEDD4 and NEDD4L. Interacts with FGF13. Interacts with FGF14, GBG3, GBB2 and SCN1B. Interacts with TMEM233. Interacts with the conotoxin GVIIJ. Interacts with CALM1; the interaction modulates the inactivation rate of SCN8A. In terms of processing, may be ubiquitinated by NEDD4L; which would promote its endocytosis. Phosphorylation at Ser-1495 by PKC in a highly conserved cytoplasmic loop slows inactivation of the sodium channel and reduces peak sodium currents. In terms of tissue distribution, isoform 1 is highly expressed in brain, moderately in spinal cord, and at low levels in dorsal root ganglia, nodose ganglia and superior cervical ganglia. Not detected in sciatic nerve and non-neuronal tissues. Isoform 2 is hardly detectable, if at all, in brain, expressed at low levels in spinal cord and at highest levels in dorsal root ganglia.

Its subcellular location is the cell membrane. It localises to the cell projection. It is found in the axon. It carries out the reaction Na(+)(in) = Na(+)(out). Functionally, pore-forming subunit of a voltage-gated sodium channel complex assuming opened or closed conformations in response to the voltage difference across membranes and through which sodium ions selectively pass along their electrochemical gradient. Contributes to neuronal excitability by regulating action potential threshold and propagation. In Rattus norvegicus (Rat), this protein is Sodium channel protein type 8 subunit alpha.